Reading from the N-terminus, the 463-residue chain is ATP synthase subunit beta (463 aa).

Residue 151-158 (GGAGVGKT) participates in ATP binding.

It belongs to the ATPase alpha/beta chains family. F-type ATPases have 2 components, CF(1) - the catalytic core - and CF(0) - the membrane proton channel. CF(1) has five subunits: alpha(3), beta(3), gamma(1), delta(1), epsilon(1). CF(0) has three main subunits: a(1), b(2) and c(9-12). The alpha and beta chains form an alternating ring which encloses part of the gamma chain. CF(1) is attached to CF(0) by a central stalk formed by the gamma and epsilon chains, while a peripheral stalk is formed by the delta and b chains.

It is found in the cell membrane. It catalyses the reaction ATP + H2O + 4 H(+)(in) = ADP + phosphate + 5 H(+)(out). In terms of biological role, produces ATP from ADP in the presence of a proton gradient across the membrane. The catalytic sites are hosted primarily by the beta subunits. The chain is ATP synthase subunit beta from Clostridium botulinum (strain ATCC 19397 / Type A).